The sequence spans 907 residues: MTSINTANINFKWDPKSLEIRTLAVERLLEPLVTQVTTLVNSSNKGPSNKKKGRSKKAHVLAASVDEATQNFLEKGEKIAKESQFLKEELTAAVEDVRKQGESMKMASGEFAEDPCSSVKRGNMVRAARALLSAVTHLLVLADMADVYQLLLQLKLVEENLMKVRNAGTEQDLGIQYKALKPEVDKLNMMAAKRQQELKDVHHKDQMAAARGVLQRNVPMLYTASRACLQHPDVAAYKANRDLIYKQLQHAVSGISNAAQATSSEDSSFSQTAGGGELAYALNNFDKQIIVDPLSFSEERFRPSLEERLESIISGAALMADSSCTRDDRRERIVAECNSVRQALQDLLSEYMGNAGRKEKSDALNTAIDRMTKKTRDLRRQLRKAVMDHVSDSFLETNVPLLVLIEAAKNGNEKEVKEYAQVFREHANKLIEVANLACSISNNEEGVKLVRMAASQLETLCPQVINAALALAAKPNSKVAQDNMDLFKDQWEKQVRVLTDAVDDITSIDDFLCVSENHILEDVNKCVIALQEKDVDGLDRTAGAIRGRAARVVHVVTSEMDNYMPGVYTEKVLEATKLLTETVMPRFTEQVEAAVEALSANNGQPVDENEFIDASRLVYDGVRDIRKAVLMIRTPEELDDSDFETEDFDSRSRTSVQTEDDQLIAGQSARAIMAQLPQEQKAKIAEQVASFQEEKSKLDAEVSKWDDSGNDIIVLAKQMCMIMMEMTDFTRGKGPLKNTSDVISAAKKIAEAGSRMDKLGRAIADQCPDSACKQDLLAYLQRIALFCHQLNICSKVKAEVQNLGGELVVSGLDSAMSLIQAAKNLMNSVVSTVKASYVASTKYQKSQDMQSLNMPAISWKMKAPEKKPLVKREKLDDGQTNKVKRSSQKKHINPVQALSEFKAMDSI.

The segment covering 870-879 (VKREKLDDGQ) has biased composition (basic and acidic residues). Residues 870–895 (VKREKLDDGQTNKVKRSSQKKHINPV) form a disordered region. Residues 882–892 (KVKRSSQKKHI) show a composition bias toward basic residues.

This sequence belongs to the vinculin/alpha-catenin family. Interacts with ctnnb1, jupa and cdh2. Interacts with cdh1 during early stages of oogenesis, interaction is no longer present when oocyte develops into the unfertilized egg. Expressed in the skin (at protein level). Expressed in the ovary.

The protein resides in the cell junction. The protein localises to the adherens junction. It is found in the cytoplasm. It localises to the cytoskeleton. Its subcellular location is the cell membrane. The protein resides in the nucleus. In terms of biological role, associates with the cytoplasmic domain of a variety of cadherins, forming catenin and cadherin complexes which are further linked to the actin filament network and is thereby involved in cell-cell adhesion. Required for embryonic development, via maintenance of adherens junctions that facilitate the maintenance of the epithelial barrier. This is Catenin alpha-1 from Danio rerio (Zebrafish).